A 317-amino-acid chain; its full sequence is Transaldolase (317 aa).

Lysine 126 (schiff-base intermediate with substrate) is an active-site residue.

Belongs to the transaldolase family. Type 1 subfamily. Homodimer.

Its subcellular location is the cytoplasm. The catalysed reaction is D-sedoheptulose 7-phosphate + D-glyceraldehyde 3-phosphate = D-erythrose 4-phosphate + beta-D-fructose 6-phosphate. Its pathway is carbohydrate degradation; pentose phosphate pathway; D-glyceraldehyde 3-phosphate and beta-D-fructose 6-phosphate from D-ribose 5-phosphate and D-xylulose 5-phosphate (non-oxidative stage): step 2/3. In terms of biological role, transaldolase is important for the balance of metabolites in the pentose-phosphate pathway. This is Transaldolase from Burkholderia ambifaria (strain MC40-6).